Consider the following 86-residue polypeptide: MAMTVKKNDNEVRIQWRVADIKIPNNEIKNVTQDQDIHAVPEENGKEISRIGSTFGKTNRVLIDTDQHLYIIYTQNDQKVYNELTK.

It belongs to the UPF0457 family.

This chain is UPF0457 protein SERP1772, found in Staphylococcus epidermidis (strain ATCC 35984 / DSM 28319 / BCRC 17069 / CCUG 31568 / BM 3577 / RP62A).